The primary structure comprises 175 residues: Co-chaperone protein HscB homolog (175 aa).

In terms of domain architecture, J spans 8 to 80; it reads DFFSLFGLPR…LNRARYLLQL (73 aa).

It belongs to the HscB family. In terms of assembly, interacts with HscA and stimulates its ATPase activity.

Functionally, co-chaperone involved in the maturation of iron-sulfur cluster-containing proteins. Seems to help targeting proteins to be folded toward HscA. The polypeptide is Co-chaperone protein HscB homolog (Chromobacterium violaceum (strain ATCC 12472 / DSM 30191 / JCM 1249 / CCUG 213 / NBRC 12614 / NCIMB 9131 / NCTC 9757 / MK)).